Reading from the N-terminus, the 136-residue chain is Protein NrdI (136 aa).

The protein belongs to the NrdI family.

Its function is as follows. Probably involved in ribonucleotide reductase function. This is Protein NrdI from Escherichia coli O7:K1 (strain IAI39 / ExPEC).